The chain runs to 205 residues: N-(5'-phosphoribosyl)anthranilate isomerase (205 aa).

Belongs to the TrpF family.

The enzyme catalyses N-(5-phospho-beta-D-ribosyl)anthranilate = 1-(2-carboxyphenylamino)-1-deoxy-D-ribulose 5-phosphate. The protein operates within amino-acid biosynthesis; L-tryptophan biosynthesis; L-tryptophan from chorismate: step 3/5. This chain is N-(5'-phosphoribosyl)anthranilate isomerase, found in Acidithiobacillus ferrooxidans (strain ATCC 23270 / DSM 14882 / CIP 104768 / NCIMB 8455) (Ferrobacillus ferrooxidans (strain ATCC 23270)).